Reading from the N-terminus, the 250-residue chain is UDP-2,3-diacylglucosamine hydrolase (250 aa).

Residues Asp7, His9, Asp40, Asn78, and His113 each contribute to the Mn(2+) site. 78–79 (NR) contributes to the substrate binding site. Residues Asp121, Ser159, Thr163, Lys166, and His194 each coordinate substrate. Mn(2+) contacts are provided by His194 and His196.

The protein belongs to the LpxH family. Requires Mn(2+) as cofactor.

It localises to the cell inner membrane. It catalyses the reaction UDP-2-N,3-O-bis[(3R)-3-hydroxytetradecanoyl]-alpha-D-glucosamine + H2O = 2-N,3-O-bis[(3R)-3-hydroxytetradecanoyl]-alpha-D-glucosaminyl 1-phosphate + UMP + 2 H(+). It participates in glycolipid biosynthesis; lipid IV(A) biosynthesis; lipid IV(A) from (3R)-3-hydroxytetradecanoyl-[acyl-carrier-protein] and UDP-N-acetyl-alpha-D-glucosamine: step 4/6. Its function is as follows. Hydrolyzes the pyrophosphate bond of UDP-2,3-diacylglucosamine to yield 2,3-diacylglucosamine 1-phosphate (lipid X) and UMP by catalyzing the attack of water at the alpha-P atom. Involved in the biosynthesis of lipid A, a phosphorylated glycolipid that anchors the lipopolysaccharide to the outer membrane of the cell. The sequence is that of UDP-2,3-diacylglucosamine hydrolase from Pseudomonas fluorescens (strain ATCC BAA-477 / NRRL B-23932 / Pf-5).